Consider the following 213-residue polypeptide: Na(+)-translocating NADH-quinone reductase subunit D (213 aa).

7 helical membrane-spanning segments follow: residues 14 to 34 (ALWI…ALAV), 42 to 62 (LTMG…VSLL), 77 to 97 (IIIS…FFNI), 101 to 121 (LSVF…AESM), 131 to 151 (FLDG…ISII), 154 to 174 (LFGF…YASA), and 183 to 203 (LGLM…VWLV).

It belongs to the NqrDE/RnfAE family. As to quaternary structure, composed of six subunits; NqrA, NqrB, NqrC, NqrD, NqrE and NqrF.

Its subcellular location is the cell inner membrane. It carries out the reaction a ubiquinone + n Na(+)(in) + NADH + H(+) = a ubiquinol + n Na(+)(out) + NAD(+). Its function is as follows. NQR complex catalyzes the reduction of ubiquinone-1 to ubiquinol by two successive reactions, coupled with the transport of Na(+) ions from the cytoplasm to the periplasm. NqrA to NqrE are probably involved in the second step, the conversion of ubisemiquinone to ubiquinol. The chain is Na(+)-translocating NADH-quinone reductase subunit D from Chlamydia muridarum (strain MoPn / Nigg).